The primary structure comprises 171 residues: 3-hydroxydecanoyl-[acyl-carrier-protein] dehydratase (171 aa).

Residue His-70 is part of the active site.

The protein belongs to the thioester dehydratase family. FabA subfamily. In terms of assembly, homodimer.

Its subcellular location is the cytoplasm. The enzyme catalyses a (3R)-hydroxyacyl-[ACP] = a (2E)-enoyl-[ACP] + H2O. It catalyses the reaction (3R)-hydroxydecanoyl-[ACP] = (2E)-decenoyl-[ACP] + H2O. The catalysed reaction is (2E)-decenoyl-[ACP] = (3Z)-decenoyl-[ACP]. Its pathway is lipid metabolism; fatty acid biosynthesis. In terms of biological role, necessary for the introduction of cis unsaturation into fatty acids. Catalyzes the dehydration of (3R)-3-hydroxydecanoyl-ACP to E-(2)-decenoyl-ACP and then its isomerization to Z-(3)-decenoyl-ACP. Can catalyze the dehydratase reaction for beta-hydroxyacyl-ACPs with saturated chain lengths up to 16:0, being most active on intermediate chain length. In Shewanella sp. (strain ANA-3), this protein is 3-hydroxydecanoyl-[acyl-carrier-protein] dehydratase.